Consider the following 215-residue polypeptide: Probable ribosome-binding factor A, chloroplastic (215 aa).

The transit peptide at 1–52 (MPNLLHTNQSHFFFLHHPPIYTVSSKTQAFHFPQSMAPVNLRTNLSVRRTVR) directs the protein to the chloroplast. Over residues 183 to 192 (KGSGEGKTEP) the composition is skewed to basic and acidic residues. The interval 183–210 (KGSGEGKTEPSDSTEDDQDWEVDDPDED) is disordered. Residues 194–210 (DSTEDDQDWEVDDPDED) show a composition bias toward acidic residues.

It belongs to the RbfA family.

Its subcellular location is the plastid. It is found in the chloroplast. In Arabidopsis thaliana (Mouse-ear cress), this protein is Probable ribosome-binding factor A, chloroplastic.